We begin with the raw amino-acid sequence, 100 residues long: Urease subunit gamma (100 aa).

The protein belongs to the urease gamma subunit family. As to quaternary structure, heterotrimer of UreA (gamma), UreB (beta) and UreC (alpha) subunits. Three heterotrimers associate to form the active enzyme.

The protein resides in the cytoplasm. It carries out the reaction urea + 2 H2O + H(+) = hydrogencarbonate + 2 NH4(+). Its pathway is nitrogen metabolism; urea degradation; CO(2) and NH(3) from urea (urease route): step 1/1. This chain is Urease subunit gamma, found in Enterobacter sp. (strain 638).